We begin with the raw amino-acid sequence, 492 residues long: 3-octaprenyl-4-hydroxybenzoate carboxy-lyase (492 aa).

Mn(2+) is bound at residue Asn-175. Prenylated FMN is bound by residues 178–180, 192–194, and 197–198; these read IYR, RWL, and RG. Residue Glu-241 coordinates Mn(2+). Asp-290 serves as the catalytic Proton donor.

This sequence belongs to the UbiD family. As to quaternary structure, homohexamer. Requires prenylated FMN as cofactor. Mn(2+) is required as a cofactor.

It is found in the cell membrane. The catalysed reaction is a 4-hydroxy-3-(all-trans-polyprenyl)benzoate + H(+) = a 2-(all-trans-polyprenyl)phenol + CO2. It functions in the pathway cofactor biosynthesis; ubiquinone biosynthesis. Its function is as follows. Catalyzes the decarboxylation of 3-octaprenyl-4-hydroxy benzoate to 2-octaprenylphenol, an intermediate step in ubiquinone biosynthesis. The chain is 3-octaprenyl-4-hydroxybenzoate carboxy-lyase from Salmonella typhi.